Here is a 131-residue protein sequence, read N- to C-terminus: Probable ATP synthase subunit g 1, mitochondrial (131 aa).

Belongs to the ATPase g subunit family. As to quaternary structure, subunit of the F-type ATPase which has 2 components, CF(1) - the catalytic core - and CF(0) - the membrane proton channel.

It is found in the mitochondrion membrane. Functionally, mitochondrial membrane ATP synthase (F(1)F(0) ATP synthase or Complex V) produces ATP from ADP in the presence of a proton gradient across the membrane which is generated by electron transport complexes of the respiratory chain. F-type ATPases consist of two structural domains, F(1) - containing the extramembraneous catalytic core, and F(0) - containing the membrane proton channel, linked together by a central stalk and a peripheral stalk. During catalysis, ATP synthesis in the catalytic domain of F(1) is coupled via a rotary mechanism of the central stalk subunits to proton translocation. Part of the complex F(0) domain. Minor subunit located with subunit a in the membrane. This Caenorhabditis elegans protein is Probable ATP synthase subunit g 1, mitochondrial.